A 361-amino-acid chain; its full sequence is Phospho-N-acetylmuramoyl-pentapeptide-transferase (361 aa).

A run of 10 helical transmembrane segments spans residues 28-48 (LAAL…IRSL), 73-93 (TMGG…WADL), 97-117 (YIWV…VDDY), 134-154 (FFWQ…TADL), 168-188 (VAIP…IVGT), 200-220 (GLAI…AYVA), 237-257 (AGEL…FLWF), 264-284 (VFMG…ITVI), 289-309 (IVLV…MIQV), and 338-358 (QVVV…LSTL).

The protein belongs to the glycosyltransferase 4 family. MraY subfamily. The cofactor is Mg(2+).

It is found in the cell inner membrane. It catalyses the reaction UDP-N-acetyl-alpha-D-muramoyl-L-alanyl-gamma-D-glutamyl-meso-2,6-diaminopimeloyl-D-alanyl-D-alanine + di-trans,octa-cis-undecaprenyl phosphate = di-trans,octa-cis-undecaprenyl diphospho-N-acetyl-alpha-D-muramoyl-L-alanyl-D-glutamyl-meso-2,6-diaminopimeloyl-D-alanyl-D-alanine + UMP. It functions in the pathway cell wall biogenesis; peptidoglycan biosynthesis. Its function is as follows. Catalyzes the initial step of the lipid cycle reactions in the biosynthesis of the cell wall peptidoglycan: transfers peptidoglycan precursor phospho-MurNAc-pentapeptide from UDP-MurNAc-pentapeptide onto the lipid carrier undecaprenyl phosphate, yielding undecaprenyl-pyrophosphoryl-MurNAc-pentapeptide, known as lipid I. The chain is Phospho-N-acetylmuramoyl-pentapeptide-transferase from Nitrosomonas europaea (strain ATCC 19718 / CIP 103999 / KCTC 2705 / NBRC 14298).